The sequence spans 1051 residues: Protein ALWAYS EARLY 2 (1051 aa).

2 stretches are compositionally biased toward basic residues: residues 1 to 11 (MAPVRKSRSVN) and 27 to 36 (SKKNKLRKKL). Residues 1 to 37 (MAPVRKSRSVNKRFTNETSPRKDAGKSKKNKLRKKLS) form a disordered region. Positions 39-93 (KLGPQWTRLELERFYDAYRKHGQEWRRVAAAIRNSRSVDMVEALFNMNRAYLSLP) constitute an SANT domain. Disordered stretches follow at residues 114–158 (EGSG…IGSP), 170–210 (ANGT…RKQF), 225–293 (TDAS…KDTT), 323–375 (AECN…TSGA), 397–605 (SELS…SSRS), and 948–981 (SIEH…NAQM). Over residues 120–130 (GEGHDASEVPR) the composition is skewed to basic and acidic residues. Over residues 131-140 (KQQKRKRAKP) the composition is skewed to basic residues. The span at 279-293 (ESSRERKLDSDKDTT) shows a compositional bias: basic and acidic residues. Over residues 323–332 (AECNDSDDNG) the composition is skewed to acidic residues. 2 stretches are compositionally biased toward basic and acidic residues: residues 350-372 (AAIE…DKHT) and 403-417 (LKEE…EKSS). The span at 560–574 (KQVSDSGPTSLSQKP) shows a compositional bias: polar residues. Positions 586–597 (LQEKAKSSETTH) are enriched in basic and acidic residues. Residues 967-981 (NDLNSQDGSEKNAQM) show a composition bias toward polar residues.

In terms of assembly, interacts with SNL1 (via PAH3). Expressed ubiquitously in vegetative and reproductive tissues.

Its subcellular location is the nucleus. The protein is Protein ALWAYS EARLY 2 (ALY2) of Arabidopsis thaliana (Mouse-ear cress).